The following is a 323-amino-acid chain: Beta-ketoacyl-[acyl-carrier-protein] synthase III (323 aa).

Catalysis depends on residues Cys114 and His250. The ACP-binding stretch occupies residues 251-255; that stretch reads QANLR. Asn280 is an active-site residue.

It belongs to the thiolase-like superfamily. FabH family. As to quaternary structure, homodimer.

The protein localises to the cytoplasm. It carries out the reaction malonyl-[ACP] + acetyl-CoA + H(+) = 3-oxobutanoyl-[ACP] + CO2 + CoA. The protein operates within lipid metabolism; fatty acid biosynthesis. Catalyzes the condensation reaction of fatty acid synthesis by the addition to an acyl acceptor of two carbons from malonyl-ACP. Catalyzes the first condensation reaction which initiates fatty acid synthesis and may therefore play a role in governing the total rate of fatty acid production. Possesses both acetoacetyl-ACP synthase and acetyl transacylase activities. Its substrate specificity determines the biosynthesis of branched-chain and/or straight-chain of fatty acids. This Cereibacter sphaeroides (strain ATCC 17025 / ATH 2.4.3) (Rhodobacter sphaeroides) protein is Beta-ketoacyl-[acyl-carrier-protein] synthase III.